A 305-amino-acid polypeptide reads, in one-letter code: MSLSRCLPLGQNARVIIIPARLAHAASTQAAAATDDAPNFFQKLAHRFQGVPLKGEAHAPKSMFEDCNKEWSAPEPLPAIPKDFKEHPDRDLVNYPYPARPMYPPKSRLLMMPDSWFTPFQKVTGVSGPYLFFGGLFAFLVNKELWVFEEQGHMTVGWILFYLLVTRTAGYKIDQGLYNGYQERVNFFKGLIQEDLKEAVEFKKTSAKQTESLNSIKESYPTALKESMALQLEATYRKNVQSVATELKRRIDYLKETEESKARVEREQLLKLINSEVDKEFSDRSFKDKYLQNAIQQLKGLNVQL.

The transit peptide at Met-1–Leu-22 directs the protein to the mitochondrion.

Belongs to the eukaryotic ATPase B chain family. Subunit of the F-type ATPase which has 2 components, CF(1) - the catalytic core - and CF(0) - the membrane proton channel.

It is found in the mitochondrion. The protein localises to the mitochondrion inner membrane. Functionally, mitochondrial membrane ATP synthase (F(1)F(0) ATP synthase or Complex V) produces ATP from ADP in the presence of a proton gradient across the membrane which is generated by electron transport complexes of the respiratory chain. F-type ATPases consist of two structural domains, F(1) - containing the extramembraneous catalytic core, and F(0) - containing the membrane proton channel, linked together by a central stalk and a peripheral stalk. During catalysis, ATP synthesis in the catalytic domain of F(1) is coupled via a rotary mechanism of the central stalk subunits to proton translocation. Part of the complex F(0) domain and the peripheric stalk, which acts as a stator to hold the subunits of the catalytic subcomplexes relative to the rotary elements. Plays a role in somatic development. Does not play a role in germline development. This is ATP synthase F(0) complex subunit B2, mitochondrial from Caenorhabditis elegans.